The sequence spans 326 residues: Protein-arginine N-acetylglucosaminyltransferase NleB2 (326 aa).

Residues 45–47 (QWF), tyrosine 69, and 216–219 (YLDM) each bind UDP-N-acetyl-alpha-D-glucosamine. A DXD motif motif is present at residues 218-220 (DMD). Aspartate 220 is a binding site for Mn(2+). Residue glutamate 250 is the Proton acceptor of the active site. Mn(2+)-binding residues include asparagine 317 and serine 319. UDP-N-acetyl-alpha-D-glucosamine-binding positions include serine 319 and 324-326 (SSW).

It belongs to the glycosyltransferase NleB family. Mn(2+) serves as cofactor.

The protein resides in the secreted. It localises to the host cell. The catalysed reaction is L-arginyl-[protein] + UDP-N-acetyl-alpha-D-glucosamine = N(omega)-(N-acetyl-beta-D-glucosaminyl)-L-arginyl-[protein] + UDP + H(+). Functionally, protein-arginine N-acetylglucosaminyltransferase effector that catalyzes the transfer of a single N-acetylglucosamine (GlcNAc) to a conserved arginine residue of host target proteins. In contrast to NleB1, not able to disrupt TNF signaling in infected cells. Shows a lower enzymatic activity than NleB1. In Escherichia coli O145:H28 (strain RM12581), this protein is Protein-arginine N-acetylglucosaminyltransferase NleB2.